The following is a 210-amino-acid chain: ATP-dependent Clp protease proteolytic subunit (210 aa).

The active-site Nucleophile is Ser-106. His-131 is a catalytic residue.

This sequence belongs to the peptidase S14 family. In terms of assembly, fourteen ClpP subunits assemble into 2 heptameric rings which stack back to back to give a disk-like structure with a central cavity, resembling the structure of eukaryotic proteasomes.

The protein localises to the cytoplasm. The catalysed reaction is Hydrolysis of proteins to small peptides in the presence of ATP and magnesium. alpha-casein is the usual test substrate. In the absence of ATP, only oligopeptides shorter than five residues are hydrolyzed (such as succinyl-Leu-Tyr-|-NHMec, and Leu-Tyr-Leu-|-Tyr-Trp, in which cleavage of the -Tyr-|-Leu- and -Tyr-|-Trp bonds also occurs).. In terms of biological role, cleaves peptides in various proteins in a process that requires ATP hydrolysis. Has a chymotrypsin-like activity. Plays a major role in the degradation of misfolded proteins. The polypeptide is ATP-dependent Clp protease proteolytic subunit (Bartonella tribocorum (strain CIP 105476 / IBS 506)).